Here is a 21-residue protein sequence, read N- to C-terminus: Complement receptor 3-related protein (21 aa).

It localises to the secreted. In terms of biological role, plays a role in adherence of C.albicans to buccal epithelial cells, and in biofilm formation. The protein is Complement receptor 3-related protein of Candida albicans (Yeast).